Here is a 257-residue protein sequence, read N- to C-terminus: Putative hydro-lyase BceJ2315_40370 (257 aa).

The protein belongs to the D-glutamate cyclase family.

The polypeptide is Putative hydro-lyase BceJ2315_40370 (Burkholderia cenocepacia (strain ATCC BAA-245 / DSM 16553 / LMG 16656 / NCTC 13227 / J2315 / CF5610) (Burkholderia cepacia (strain J2315))).